The chain runs to 622 residues: Prothrombin (622 aa).

An N-terminal signal peptide occupies residues 1–24; that stretch reads MAHVRGLQLPGCLALAALCSLVHS. Positions 25-43 are excised as a propeptide; the sequence is QHVFLAPQQARSLLQRVRR. The Gla domain maps to 44 to 89; the sequence is ANTFLEEVRKGNLERECVEETCSYEEAFEALESSTATDVFWAKYTA. A 4-carboxyglutamate mark is found at glutamate 49, glutamate 50, glutamate 57, glutamate 59, glutamate 62, glutamate 63, glutamate 68, glutamate 69, glutamate 72, and glutamate 75. Cysteine 60 and cysteine 65 are disulfide-bonded. Cystine bridges form between cysteine 90–cysteine 103, cysteine 108–cysteine 186, cysteine 129–cysteine 169, cysteine 157–cysteine 181, cysteine 213–cysteine 291, cysteine 234–cysteine 274, cysteine 262–cysteine 286, cysteine 336–cysteine 482, cysteine 391–cysteine 407, cysteine 536–cysteine 550, and cysteine 564–cysteine 594. 2 Kringle domains span residues 108 to 186 and 213 to 291; these read CAEG…IPVC and CVPD…LNYC. Asparagine 121 and asparagine 143 each carry an N-linked (GlcNAc...) (complex) asparagine glycan. In terms of domain architecture, Peptidase S1 spans 364–618; sequence IVEGSDAEIG…LKKWIQKVID (255 aa). The active-site Charge relay system is histidine 406. N-linked (GlcNAc...) (complex) asparagine glycosylation occurs at asparagine 416. Aspartate 462 functions as the Charge relay system in the catalytic mechanism. Residues 551 to 573 form a high affinity receptor-binding region which is also known as the TP508 peptide region; the sequence is AGYKPDEGKRGDACEGDSGGPFV. Catalysis depends on serine 568, which acts as the Charge relay system.

The protein belongs to the peptidase S1 family. Heterodimer (named alpha-thrombin) of a light and a heavy chain; disulfide-linked. Forms a heterodimer with SERPINA5. In plasma, interacts (via N-terminus) with alpha-1-microglobulin with molar ratio 1:2 and 1:1; this interaction does not prevent the activation of prothrombin to thrombin. Interacts (thrombin) with iripin-8, a serine protease inhibitor from Ixodes ricinus saliva. Interacts (thrombin) with iripin-3, a serine protease inhibitor from Ixodes ricinus saliva. Interacts (thrombin) with Anopheles albimanus salivary thrombin inhibitor anophelin; the interaction results in thrombin inhibition. Interacts (thrombin) with Anopheles gambiae salivary thrombin inhibitor anophelin; the interaction results in thrombin inhibition. Interacts (thrombin) with Amblyomma variegatum variegin; the interaction results in thrombin inhibition. Interacts (thrombin) with Xenopsylla cheopis salivary thrombin inhibitor XC-42. Interacts (thrombin) with Xenopsylla cheopis salivary thrombin inhibitor XC-43. The gamma-carboxyglutamyl residues, which bind calcium ions, result from the carboxylation of glutamyl residues by a microsomal enzyme, the vitamin K-dependent carboxylase. The modified residues are necessary for the calcium-dependent interaction with a negatively charged phospholipid surface, which is essential for the conversion of prothrombin to thrombin. In terms of processing, N-glycosylated. N-glycan heterogeneity at Asn-121: Hex3HexNAc3 (minor), Hex4HexNAc3 (minor) and Hex5HexNAc4 (major). At Asn-143: Hex4HexNAc3 (minor) and Hex5HexNAc4 (major). Post-translationally, in the penultimate step of the coagulation cascade, prothrombin is converted to thrombin by the prothrombinase complex composed of factor Xa (F10), cofactor Va (F5), and phospholipids. This activation requires factor Xa-catalyzed sequential cleavage at 2 sites, Arg-314 and Arg-363, along 2 possible pathways. In the first pathway, the first cleavage occurs at Arg-314, leading to the formation of the inactive intermediate prethrombin-2. This pathway preferentially occurs on platelets and in the absence of cofactor Va. In the second pathway, the first cleavage occurs at Arg-363, which separates protease domain into 2 chains that remain connected through a disulfide bond and generates the active intermediate meizothrombin. The presence of cofactor Va directs activation along the meizothrombin pathway and greatly accelerates the rate of cleavage at Arg-363, but has a smaller effect on the cleavage of meizothrombin at Arg-314. Meizothrombin accumulates as an intermediate when prothrombinase is assembled on the membrane of red blood cells. As to expression, expressed by the liver and secreted in plasma.

It is found in the secreted. The protein localises to the extracellular space. It catalyses the reaction Selective cleavage of Arg-|-Gly bonds in fibrinogen to form fibrin and release fibrinopeptides A and B.. With respect to regulation, activity is promoted in the presence of negatively charged surfaces, such as polyphosphate and dextran sulfate. Inhibited by SERPINA5. Functionally, thrombin, which cleaves bonds after Arg and Lys, converts fibrinogen to fibrin and activates factors V, VII, VIII, XIII, and, in complex with thrombomodulin, protein C. Functions in blood homeostasis, inflammation and wound healing. Activates coagulation factor XI (F11); activation is promoted by the contact with negatively charged surfaces. Triggers the production of pro-inflammatory cytokines, such as MCP-1/CCL2 and IL8/CXCL8, in endothelial cells. The chain is Prothrombin (F2) from Homo sapiens (Human).